Consider the following 568-residue polypeptide: Estrogen receptor beta-1 (568 aa).

The segment at 12-169 (SEYAEGDSSL…SLRGKADMHY (158 aa)) is modulating. NR C4-type zinc fingers lie at residues 170-190 (CAVC…CEGC) and 206-230 (CPAT…LRKC). The segment at residues 170–235 (CAVCSDYASG…RLRKCYEVGM (66 aa)) is a DNA-binding region (nuclear receptor). One can recognise an NR LBD domain in the interval 292–528 (SPEELIARIM…DLLLEMLDAH (237 aa)).

The protein belongs to the nuclear hormone receptor family. NR3 subfamily. Binds DNA as a homodimer. Can form a heterodimer with ER-alpha.

The protein localises to the nucleus. In terms of biological role, binds estrogens with an affinity similar to that of ER-alpha, and activates expression of reporter genes containing estrogen response elements (ERE) in an estrogen-dependent manner. This chain is Estrogen receptor beta-1 (esr2a), found in Carassius auratus (Goldfish).